Reading from the N-terminus, the 149-residue chain is Ribosome-binding factor A (149 aa).

Residues 123–149 are disordered; it reads LAKLREGAAPAGDADPYKTSSKSESEE.

It belongs to the RbfA family. As to quaternary structure, monomer. Binds 30S ribosomal subunits, but not 50S ribosomal subunits or 70S ribosomes.

The protein resides in the cytoplasm. Its function is as follows. One of several proteins that assist in the late maturation steps of the functional core of the 30S ribosomal subunit. Associates with free 30S ribosomal subunits (but not with 30S subunits that are part of 70S ribosomes or polysomes). Required for efficient processing of 16S rRNA. May interact with the 5'-terminal helix region of 16S rRNA. The protein is Ribosome-binding factor A of Corynebacterium glutamicum (strain ATCC 13032 / DSM 20300 / JCM 1318 / BCRC 11384 / CCUG 27702 / LMG 3730 / NBRC 12168 / NCIMB 10025 / NRRL B-2784 / 534).